A 386-amino-acid polypeptide reads, in one-letter code: Probable dual-specificity RNA methyltransferase RlmN (386 aa).

The Proton acceptor role is filled by glutamate 123. Residues 129–372 enclose the Radical SAM core domain; it reads YPTRTTLCIS…ATLRDTRGQD (244 aa). An intrachain disulfide couples cysteine 136 to cysteine 377. 3 residues coordinate [4Fe-4S] cluster: cysteine 143, cysteine 147, and cysteine 150. Residues 198 to 199, serine 232, 255 to 257, and asparagine 334 each bind S-adenosyl-L-methionine; these read GE and SLH. The S-methylcysteine intermediate role is filled by cysteine 377.

The protein belongs to the radical SAM superfamily. RlmN family. It depends on [4Fe-4S] cluster as a cofactor.

The protein localises to the cytoplasm. The catalysed reaction is adenosine(2503) in 23S rRNA + 2 reduced [2Fe-2S]-[ferredoxin] + 2 S-adenosyl-L-methionine = 2-methyladenosine(2503) in 23S rRNA + 5'-deoxyadenosine + L-methionine + 2 oxidized [2Fe-2S]-[ferredoxin] + S-adenosyl-L-homocysteine. It catalyses the reaction adenosine(37) in tRNA + 2 reduced [2Fe-2S]-[ferredoxin] + 2 S-adenosyl-L-methionine = 2-methyladenosine(37) in tRNA + 5'-deoxyadenosine + L-methionine + 2 oxidized [2Fe-2S]-[ferredoxin] + S-adenosyl-L-homocysteine. In terms of biological role, specifically methylates position 2 of adenine 2503 in 23S rRNA and position 2 of adenine 37 in tRNAs. This Bifidobacterium adolescentis (strain ATCC 15703 / DSM 20083 / NCTC 11814 / E194a) protein is Probable dual-specificity RNA methyltransferase RlmN.